Consider the following 372-residue polypeptide: Alanine dehydrogenase (372 aa).

The substrate site is built by Arg15 and Lys75. Residue His96 is the Proton donor/acceptor of the active site. NAD(+) is bound by residues Ser134, Ile178 to Ala179, Asp198, Ser220, Val239 to Leu240, Ile267 to Asp270, Arg280, and Val299 to Met302. The active-site Proton donor/acceptor is the Asp270.

It belongs to the AlaDH/PNT family. In terms of assembly, homohexamer.

It is found in the cytoplasm. The catalysed reaction is L-alanine + NAD(+) + H2O = pyruvate + NH4(+) + NADH + H(+). The protein operates within amino-acid degradation; L-alanine degradation via dehydrogenase pathway; NH(3) and pyruvate from L-alanine: step 1/1. With respect to regulation, inhibited by p-chloromercuribenzoate and HgCl(2) and by Cu(2+) and Pb(2+) salts, unaffected by amino acids such as D-alanine and beta-alanine or by nucleotides or nucleosides. Its function is as follows. Catalyzes the reversible reductive amination of pyruvate to L-alanine. Prefers L-alanine for oxidative deamination, other substrates are poorly reactive. In the other direction 2-oxobutyrate is almost as reactive as pyruvate. Ammonia is the sole amino donor for the reductive amination of pyruvate, NADPH is inert. Reductive amination proceeds through a sequential, ordered ternary-binary mechanism, where NADH binds first followed by ammonia and pyruvate; the products are released in the order L-alanine and NAD(+). A key factor in the assimilation of L-alanine as an energy source via the tricarboxylic acid cycle during sporulation. The sequence is that of Alanine dehydrogenase (ald) from Lysinibacillus sphaericus (Bacillus sphaericus).